A 190-amino-acid chain; its full sequence is MVSFVQLVVQIREIFEHKMVDVDEVMKLMGSYKSDINEWRRFAIFDMNKYTRNLVDIGNGKYNLMILCWGPGMASSVHDHTDAHCFVKILDGELTETKYDWPKKKHTPLETIENKTYGLNGVSYMNDELGLHRMENQSHSNGAVSLHLYIPPYSTCNAFDERTGKKTKCTVTFYSKYGEKIDYHGSKEGK.

Fe cation contacts are provided by histidine 78, histidine 80, and histidine 132. Positions 85-149 (CFVKILDGEL…SNGAVSLHLY (65 aa)) form a cross-link, 3'-(S-cysteinyl)-tyrosine (Cys-Tyr).

Belongs to the cysteine dioxygenase family. It depends on Fe cation as a cofactor. Post-translationally, the thioether cross-link between Cys-85 and Tyr-149 plays a structural role through stabilizing the Fe(2+) ion, and prevents the production of highly damaging free hydroxyl radicals by holding the oxygen radical via hydroxyl hydrogen.

It catalyses the reaction L-cysteine + O2 = 3-sulfino-L-alanine + H(+). Its pathway is organosulfur biosynthesis; taurine biosynthesis; hypotaurine from L-cysteine: step 1/2. This Caenorhabditis briggsae protein is Cysteine dioxygenase (cdo-1).